Here is a 508-residue protein sequence, read N- to C-terminus: Photosystem II CP47 reaction center protein (508 aa).

6 helical membrane passes run 21–36 (SVHL…WAGS), 101–115 (IVLS…IWHW), 140–156 (GIHL…FGAF), 203–218 (IAAG…FHLT), 237–252 (VLSS…AFVV), and 457–472 (CFAL…HGAR).

Belongs to the PsbB/PsbC family. PsbB subfamily. PSII is composed of 1 copy each of membrane proteins PsbA, PsbB, PsbC, PsbD, PsbE, PsbF, PsbH, PsbI, PsbJ, PsbK, PsbL, PsbM, PsbT, PsbX, PsbY, PsbZ, Psb30/Ycf12, at least 3 peripheral proteins of the oxygen-evolving complex and a large number of cofactors. It forms dimeric complexes. Binds multiple chlorophylls. PSII binds additional chlorophylls, carotenoids and specific lipids. serves as cofactor.

It localises to the plastid. The protein resides in the chloroplast thylakoid membrane. In terms of biological role, one of the components of the core complex of photosystem II (PSII). It binds chlorophyll and helps catalyze the primary light-induced photochemical processes of PSII. PSII is a light-driven water:plastoquinone oxidoreductase, using light energy to abstract electrons from H(2)O, generating O(2) and a proton gradient subsequently used for ATP formation. The chain is Photosystem II CP47 reaction center protein from Chlorokybus atmophyticus (Soil alga).